Reading from the N-terminus, the 172-residue chain is Adenine phosphoribosyltransferase (172 aa).

This sequence belongs to the purine/pyrimidine phosphoribosyltransferase family. As to quaternary structure, homodimer.

The protein localises to the cytoplasm. It catalyses the reaction AMP + diphosphate = 5-phospho-alpha-D-ribose 1-diphosphate + adenine. The protein operates within purine metabolism; AMP biosynthesis via salvage pathway; AMP from adenine: step 1/1. Catalyzes a salvage reaction resulting in the formation of AMP, that is energically less costly than de novo synthesis. This is Adenine phosphoribosyltransferase from Staphylococcus aureus (strain Mu3 / ATCC 700698).